The following is a 326-amino-acid chain: Pectate lyase plyB (326 aa).

An N-terminal signal peptide occupies residues 1-15 (MRFTPLFLLAAVAIA). Residues D133, D162, and D166 each contribute to the Ca(2+) site. Residue R219 is part of the active site.

It belongs to the polysaccharide lyase 1 family. The cofactor is Ca(2+).

The protein localises to the secreted. The enzyme catalyses Eliminative cleavage of (1-&gt;4)-alpha-D-galacturonan to give oligosaccharides with 4-deoxy-alpha-D-galact-4-enuronosyl groups at their non-reducing ends.. Its pathway is glycan metabolism; pectin degradation; 2-dehydro-3-deoxy-D-gluconate from pectin: step 2/5. Its function is as follows. Pectinolytic enzyme consist of four classes of enzymes: pectin lyase, polygalacturonase, pectin methylesterase and rhamnogalacturonase. Among pectinolytic enzymes, pectin lyase is the most important in depolymerization of pectin, since it cleaves internal glycosidic bonds of highly methylated pectins. The polypeptide is Pectate lyase plyB (plyB) (Emericella nidulans (strain FGSC A4 / ATCC 38163 / CBS 112.46 / NRRL 194 / M139) (Aspergillus nidulans)).